Here is a 286-residue protein sequence, read N- to C-terminus: MSDYLVKGMAGEFIRFTGVSSRQTVEEARKRHNLSRLATAALGRALTATIILASDLKNPGDLLTLRIFGDGPLGGIVCSAGNDGMVRGYLFNPEVELPLNDANKLDVGRGIGKGHLYVTKDLGLKEPYTGTVQLVSGEIAEDVAYYLYYSEQRPNVFNLGVLVNPDGSVAQAGGCLIEILPGAPEEIISTLEQNLGEQQSLTYQLQQGKHIEEIIQEVVNPYKTEIYVKKPVGFLCSCSREKLLPHLIGLYSEVKDEEIVEAVCHFCREKYTFSGKEIKEYKEKNT.

2 disulfide bridges follow: C236/C238 and C264/C267.

Belongs to the HSP33 family. Post-translationally, under oxidizing conditions two disulfide bonds are formed involving the reactive cysteines. Under reducing conditions zinc is bound to the reactive cysteines and the protein is inactive.

The protein localises to the cytoplasm. Its function is as follows. Redox regulated molecular chaperone. Protects both thermally unfolding and oxidatively damaged proteins from irreversible aggregation. Plays an important role in the bacterial defense system toward oxidative stress. In Carboxydothermus hydrogenoformans (strain ATCC BAA-161 / DSM 6008 / Z-2901), this protein is 33 kDa chaperonin.